The chain runs to 626 residues: DNA primase (626 aa).

Residues Cys-39–Cys-63 form a CHC2-type zinc finger. The Toprim domain maps to Glu-264 to Gly-346. 3 residues coordinate Mg(2+): Glu-270, Asp-314, and Asp-316.

It belongs to the DnaG primase family. Monomer. Interacts with DnaB. Zn(2+) serves as cofactor. The cofactor is Mg(2+).

The catalysed reaction is ssDNA + n NTP = ssDNA/pppN(pN)n-1 hybrid + (n-1) diphosphate.. RNA polymerase that catalyzes the synthesis of short RNA molecules used as primers for DNA polymerase during DNA replication. The sequence is that of DNA primase from Listeria innocua serovar 6a (strain ATCC BAA-680 / CLIP 11262).